A 103-amino-acid polypeptide reads, in one-letter code: PTS system oligo-beta-mannoside-specific EIIB component (103 aa).

In terms of domain architecture, PTS EIIB type-3 spans 1–103 (MKKILLACSS…EQALSLMVNQ (103 aa)). Cys-8 functions as the Phosphocysteine intermediate in the catalytic mechanism. Cys-8 bears the Phosphocysteine; by EIIA mark.

It localises to the cytoplasm. It catalyses the reaction D-cellobiose(out) + N(pros)-phospho-L-histidyl-[protein] = 6-phospho-beta-D-glucosyl-(1-&gt;4)-D-glucose(in) + L-histidyl-[protein]. In terms of biological role, the phosphoenolpyruvate-dependent sugar phosphotransferase system (sugar PTS), a major carbohydrate active transport system, catalyzes the phosphorylation of incoming sugar substrates concomitantly with their translocation across the cell membrane. The enzyme II GmuABC PTS system is involved in the transport of oligo-glucomannans such as cellobiose or mannobiose. This chain is PTS system oligo-beta-mannoside-specific EIIB component, found in Bacillus subtilis (strain 168).